The following is a 380-amino-acid chain: Cytochrome b (380 aa).

4 helical membrane-spanning segments follow: residues 33–53 (FGSL…FLAM), 77–98 (WLIR…YLHI), 113–133 (WNIG…GYVL), and 178–198 (FFAF…LHFF). Positions 83 and 97 each coordinate heme b. Heme b-binding residues include His-182 and His-196. His-201 serves as a coordination point for a ubiquinone. Transmembrane regions (helical) follow at residues 226-246 (YKDL…SFFS), 288-308 (LGGV…PILH), 320-340 (LTQL…WIGG), and 347-367 (FIAV…ILIP).

It belongs to the cytochrome b family. The cytochrome bc1 complex contains 3 respiratory subunits (MT-CYB, CYC1 and UQCRFS1), 2 core proteins (UQCRC1 and UQCRC2) and probably 6 low-molecular weight proteins. Requires heme b as cofactor.

The protein resides in the mitochondrion inner membrane. Its function is as follows. Component of the ubiquinol-cytochrome c reductase complex (complex III or cytochrome b-c1 complex) that is part of the mitochondrial respiratory chain. The b-c1 complex mediates electron transfer from ubiquinol to cytochrome c. Contributes to the generation of a proton gradient across the mitochondrial membrane that is then used for ATP synthesis. This Zenopsis nebulosa (Mirror dory) protein is Cytochrome b (mt-cyb).